A 99-amino-acid chain; its full sequence is Nucleoid-associated protein UPA3_0088 (99 aa).

Belongs to the YbaB/EbfC family. Homodimer.

It is found in the cytoplasm. It localises to the nucleoid. Binds to DNA and alters its conformation. May be involved in regulation of gene expression, nucleoid organization and DNA protection. The protein is Nucleoid-associated protein UPA3_0088 of Ureaplasma parvum serovar 3 (strain ATCC 27815 / 27 / NCTC 11736).